Here is a 341-residue protein sequence, read N- to C-terminus: Probable long-chain-alcohol O-fatty-acyltransferase 9 (341 aa).

7 helical membrane passes run 9-29 (IIVW…SANI), 36-56 (LFSV…FSSV), 82-102 (GPLF…CFPI), 122-142 (FAIK…SHFL), 146-166 (VLLS…LGPL), 231-251 (MGYL…YFYI), and 295-315 (RLLT…PLFI).

The protein belongs to the wax synthase family.

Its subcellular location is the membrane. The catalysed reaction is a long chain fatty alcohol + a fatty acyl-CoA = a wax ester + CoA. In terms of biological role, catalyzes the final step in the synthesis of long-chain linear esters (waxes). This is Probable long-chain-alcohol O-fatty-acyltransferase 9 from Arabidopsis thaliana (Mouse-ear cress).